The primary structure comprises 481 residues: Glutamyl-tRNA(Gln) amidotransferase subunit A (481 aa).

Residues Lys-78 and Ser-153 each act as charge relay system in the active site. Catalysis depends on Ser-177, which acts as the Acyl-ester intermediate.

Belongs to the amidase family. GatA subfamily. Heterotrimer of A, B and C subunits.

It catalyses the reaction L-glutamyl-tRNA(Gln) + L-glutamine + ATP + H2O = L-glutaminyl-tRNA(Gln) + L-glutamate + ADP + phosphate + H(+). In terms of biological role, allows the formation of correctly charged Gln-tRNA(Gln) through the transamidation of misacylated Glu-tRNA(Gln) in organisms which lack glutaminyl-tRNA synthetase. The reaction takes place in the presence of glutamine and ATP through an activated gamma-phospho-Glu-tRNA(Gln). In Borrelia garinii subsp. bavariensis (strain ATCC BAA-2496 / DSM 23469 / PBi) (Borreliella bavariensis), this protein is Glutamyl-tRNA(Gln) amidotransferase subunit A.